Consider the following 377-residue polypeptide: Citrate synthase (377 aa).

Residues His-258 and Asp-313 contribute to the active site.

It belongs to the citrate synthase family. As to quaternary structure, homodimer. In terms of processing, the N-terminus is blocked by acetylation.

It carries out the reaction oxaloacetate + acetyl-CoA + H2O = citrate + CoA + H(+). Its pathway is carbohydrate metabolism; tricarboxylic acid cycle; isocitrate from oxaloacetate: step 1/2. Its activity is regulated as follows. Allosterically inhibited by NADH. This is Citrate synthase (gltA) from Saccharolobus solfataricus (strain ATCC 35092 / DSM 1617 / JCM 11322 / P2) (Sulfolobus solfataricus).